The following is a 134-amino-acid chain: ATP synthase epsilon chain (134 aa).

This sequence belongs to the ATPase epsilon chain family. F-type ATPases have 2 components, CF(1) - the catalytic core - and CF(0) - the membrane proton channel. CF(1) has five subunits: alpha(3), beta(3), gamma(1), delta(1), epsilon(1). CF(0) has three main subunits: a, b and c.

It localises to the cell inner membrane. Functionally, produces ATP from ADP in the presence of a proton gradient across the membrane. This Nitratidesulfovibrio vulgaris (strain ATCC 29579 / DSM 644 / CCUG 34227 / NCIMB 8303 / VKM B-1760 / Hildenborough) (Desulfovibrio vulgaris) protein is ATP synthase epsilon chain.